We begin with the raw amino-acid sequence, 394 residues long: Alanine racemase 2 (394 aa).

The active-site Proton acceptor; specific for D-alanine is Lys39. N6-(pyridoxal phosphate)lysine is present on Lys39. A substrate-binding site is contributed by Arg139. The active-site Proton acceptor; specific for L-alanine is the Tyr272. Met320 is a substrate binding site.

Belongs to the alanine racemase family. It depends on pyridoxal 5'-phosphate as a cofactor.

The catalysed reaction is L-alanine = D-alanine. Its pathway is amino-acid biosynthesis; D-alanine biosynthesis; D-alanine from L-alanine: step 1/1. In terms of biological role, catalyzes the interconversion of L-alanine and D-alanine. May also act on other amino acids. The chain is Alanine racemase 2 (alr2) from Bacillus subtilis (strain 168).